The following is a 109-amino-acid chain: Large ribosomal subunit protein uL24 (109 aa).

Belongs to the universal ribosomal protein uL24 family. Part of the 50S ribosomal subunit.

One of two assembly initiator proteins, it binds directly to the 5'-end of the 23S rRNA, where it nucleates assembly of the 50S subunit. Functionally, one of the proteins that surrounds the polypeptide exit tunnel on the outside of the subunit. In Rickettsia rickettsii (strain Iowa), this protein is Large ribosomal subunit protein uL24.